The primary structure comprises 670 residues: DNA ligase (670 aa).

Residues 31–35, 76–77, and Glu-108 each bind NAD(+); these read DAEYD and SL. Catalysis depends on Lys-110, which acts as the N6-AMP-lysine intermediate. The NAD(+) site is built by Arg-131, Glu-166, Lys-271, and Lys-295. Zn(2+) is bound by residues Cys-388, Cys-391, Cys-406, and Cys-412. Residues 579-668 form the BRCT domain; the sequence is NIGGSLSGKK…NTPALKKETS (90 aa).

It belongs to the NAD-dependent DNA ligase family. LigA subfamily. Mg(2+) is required as a cofactor. It depends on Mn(2+) as a cofactor.

The enzyme catalyses NAD(+) + (deoxyribonucleotide)n-3'-hydroxyl + 5'-phospho-(deoxyribonucleotide)m = (deoxyribonucleotide)n+m + AMP + beta-nicotinamide D-nucleotide.. Its function is as follows. DNA ligase that catalyzes the formation of phosphodiester linkages between 5'-phosphoryl and 3'-hydroxyl groups in double-stranded DNA using NAD as a coenzyme and as the energy source for the reaction. It is essential for DNA replication and repair of damaged DNA. This Neorickettsia sennetsu (strain ATCC VR-367 / Miyayama) (Ehrlichia sennetsu) protein is DNA ligase.